Consider the following 347-residue polypeptide: Tetraacyldisaccharide 4'-kinase (347 aa).

Position 65 to 72 (65 to 72 (FVGGTGKT)) interacts with ATP.

This sequence belongs to the LpxK family.

The catalysed reaction is a lipid A disaccharide + ATP = a lipid IVA + ADP + H(+). It participates in glycolipid biosynthesis; lipid IV(A) biosynthesis; lipid IV(A) from (3R)-3-hydroxytetradecanoyl-[acyl-carrier-protein] and UDP-N-acetyl-alpha-D-glucosamine: step 6/6. Functionally, transfers the gamma-phosphate of ATP to the 4'-position of a tetraacyldisaccharide 1-phosphate intermediate (termed DS-1-P) to form tetraacyldisaccharide 1,4'-bis-phosphate (lipid IVA). The chain is Tetraacyldisaccharide 4'-kinase from Janthinobacterium sp. (strain Marseille) (Minibacterium massiliensis).